An 846-amino-acid polypeptide reads, in one-letter code: Structure-specific endonuclease subunit SLX4 (846 aa).

Disordered regions lie at residues 1–20 (MTDH…VGSA), 84–111 (KAGA…AESM), 123–164 (QPAE…VKKA), 283–322 (RTSK…SKIT), 480–513 (DPTP…SSLL), 624–690 (PPNA…MGSQ), and 723–751 (TLAS…QTRA). Positions 141–153 (KPSEKGQKSEKTA) are enriched in basic and acidic residues. A compositionally biased stretch (polar residues) spans 293-303 (LDTGTSSTSEG). A compositionally biased stretch (basic residues) spans 306–318 (KRKQTKKAKRSAK). Polar residues-rich tracts occupy residues 657-680 (KEIT…SKPT) and 725-751 (ASRS…QTRA).

Belongs to the SLX4 family. As to quaternary structure, forms a heterodimer with SLX1. Phosphorylated in response to DNA damage.

It localises to the nucleus. In terms of biological role, regulatory subunit of the SLX1-SLX4 structure-specific endonuclease that resolves DNA secondary structures generated during DNA repair and recombination. Has endonuclease activity towards branched DNA substrates, introducing single-strand cuts in duplex DNA close to junctions with ss-DNA. This Arthroderma otae (strain ATCC MYA-4605 / CBS 113480) (Microsporum canis) protein is Structure-specific endonuclease subunit SLX4.